Here is a 219-residue protein sequence, read N- to C-terminus: Cytochrome b6 (219 aa).

The helical transmembrane segment at 32–52 threads the bilayer; it reads IFYCFGGIVLTAFIFQGASGF. Cys-35 serves as a coordination point for heme c. Residues His-86 and His-100 each coordinate heme b. The next 3 helical transmembrane spans lie at 90–110, 116–136, and 190–210; these read SGCM…TGGF, LTWI…VTGY, and IHTF…FSLL. The heme b site is built by His-191 and His-206.

It belongs to the cytochrome b family. PetB subfamily. The 4 large subunits of the cytochrome b6-f complex are cytochrome b6, subunit IV (17 kDa polypeptide, PetD), cytochrome f and the Rieske protein, while the 4 small subunits are PetG, PetL, PetM and PetN. The complex functions as a dimer. Heme b serves as cofactor. Heme c is required as a cofactor.

Its subcellular location is the plastid. It localises to the chloroplast thylakoid membrane. In terms of biological role, component of the cytochrome b6-f complex, which mediates electron transfer between photosystem II (PSII) and photosystem I (PSI), cyclic electron flow around PSI, and state transitions. The protein is Cytochrome b6 of Heterocapsa triquetra (Dinoflagellate).